The primary structure comprises 302 residues: MASSGAARPAASRVLQRCQPFSSSTSCAAPVTTWRTLARPSTAAATAQATTQQLRLLSISMPLQKRRTTRDNNRLRGQSTIHRSGIRRPLSVSEEDIPQPVQDEGVGKMREEDTDPDHGLWGFFYDKQLVPTPKQLSAHGRSWTVQELRGKSWEDLHALWWMCCRERNRIATAIRTRQFIGIKKDNPFDEAEARGRTVNKTMQAIKHVLTERFYAWEDARKLAMEDPEINLSGKGPIYTPSLHFESADTSSYIEEPVADHLETPETSGQEKVGELSPAGAVDPSTILASKTGKPVTDAPRSS.

Residues 1–38 (MASSGAARPAASRVLQRCQPFSSSTSCAAPVTTWRTLA) constitute a mitochondrion transit peptide. Residues 255–302 (EPVADHLETPETSGQEKVGELSPAGAVDPSTILASKTGKPVTDAPRSS) are disordered.

Belongs to the universal ribosomal protein uL29 family. In terms of assembly, component of the mitochondrial large ribosomal subunit. Mature mitochondrial ribosomes consist of a small (37S) and a large (54S) subunit. The 37S subunit contains at least 33 different proteins and 1 molecule of RNA (15S). The 54S subunit contains at least 45 different proteins and 1 molecule of RNA (21S).

Its subcellular location is the mitochondrion. The protein is Large ribosomal subunit protein uL29m (MRPL4) of Pyricularia oryzae (strain 70-15 / ATCC MYA-4617 / FGSC 8958) (Rice blast fungus).